The sequence spans 659 residues: Methionine--tRNA ligase (659 aa).

A 'HIGH' region motif is present at residues 13–23 (YYPSGNLHIGH). The short motif at 308 to 312 (KMSKS) is the 'KMSKS' region element. Lys-311 is an ATP binding site. Residues 559-659 (DFDKVEIKAA…SAIPNGAVIK (101 aa)) form the tRNA-binding domain.

Belongs to the class-I aminoacyl-tRNA synthetase family. MetG type 2B subfamily. As to quaternary structure, homodimer.

Its subcellular location is the cytoplasm. The enzyme catalyses tRNA(Met) + L-methionine + ATP = L-methionyl-tRNA(Met) + AMP + diphosphate. Functionally, is required not only for elongation of protein synthesis but also for the initiation of all mRNA translation through initiator tRNA(fMet) aminoacylation. The polypeptide is Methionine--tRNA ligase (Staphylococcus haemolyticus (strain JCSC1435)).